The primary structure comprises 395 residues: Xylose isomerase (395 aa).

Residues His-54 and Glu-57 contribute to the active site. Residues 80-108 form a disordered region; the sequence is AVPAGAGRDRHEGADGDDEPVHAPGCSRD. Positions 189, 225, 228, 253, 263, 265, and 295 each coordinate Mg(2+).

Belongs to the xylose isomerase family. As to quaternary structure, homotetramer. Mg(2+) is required as a cofactor.

The protein resides in the cytoplasm. The catalysed reaction is alpha-D-xylose = alpha-D-xylulofuranose. The polypeptide is Xylose isomerase (Streptomyces lividans).